Here is a 492-residue protein sequence, read N- to C-terminus: Virion host shutoff protein (492 aa).

Disordered regions lie at residues Glu110–Ser130, Ser288–Met307, and Glu334–Gln371.

Belongs to the herpesviridae VHS protein family. As to quaternary structure, interacts with human EIF4H, EIF4A1 and EIF4A2; interaction with eIF4AI and EIF4A2 presumably allows Vhs protein to associate with the eIF4F cap-binding complex.

The protein resides in the virion. Minor structural protein that acts as an endoribonuclease during lytic infection. Degrades host mRNAs in the cytoplasm by cutting them at preferred sites, including some in regions of translation initiation. Together with inhibition of host splicing by ICP27, contributes to an overall decrease in host protein synthesis. Also, after the onset of viral transcription, accelerates the turnover of viral mRNA, thereby facilitating the sequential expression of different classes of viral genes. Binds translation initiation factors eIF4H, eIF4AI, and eIF4AII, thereby may interact directly with the translation initiation complex and thus digest specifically mRNAs. Also impedes antigen presentation by major histocompatibility complex class I and class II molecules, inhibits secretion of cytokines that would otherwise recruit lymphocytes and neutrophils cells to the site of infection and blocks the activation of dendritic cells. Impedes the alpha/beta interferon-mediated response to infection. Inhibits the integrated stress response (ISR) in the infected cell, this function requires the endonuclease activity. Stress granule formation is thus inhibited, which allows protein synthesis and viral replication. The chain is Virion host shutoff protein (UL41) from Homo sapiens (Human).